The following is a 388-amino-acid chain: Succinate--CoA ligase [ADP-forming] subunit beta (388 aa).

Residues 9–244 (KQLFARYGLP…QSQEDPREAQ (236 aa)) enclose the ATP-grasp domain. ATP contacts are provided by residues Lys-46, 53 to 55 (GRG), Glu-99, Thr-102, and Glu-107. Mg(2+) is bound by residues Asn-199 and Asp-213. Residues Asn-264 and 321-323 (GIV) each bind substrate.

It belongs to the succinate/malate CoA ligase beta subunit family. Heterotetramer of two alpha and two beta subunits. Requires Mg(2+) as cofactor.

It carries out the reaction succinate + ATP + CoA = succinyl-CoA + ADP + phosphate. The catalysed reaction is GTP + succinate + CoA = succinyl-CoA + GDP + phosphate. The protein operates within carbohydrate metabolism; tricarboxylic acid cycle; succinate from succinyl-CoA (ligase route): step 1/1. Its function is as follows. Succinyl-CoA synthetase functions in the citric acid cycle (TCA), coupling the hydrolysis of succinyl-CoA to the synthesis of either ATP or GTP and thus represents the only step of substrate-level phosphorylation in the TCA. The beta subunit provides nucleotide specificity of the enzyme and binds the substrate succinate, while the binding sites for coenzyme A and phosphate are found in the alpha subunit. The chain is Succinate--CoA ligase [ADP-forming] subunit beta from Escherichia coli O139:H28 (strain E24377A / ETEC).